The primary structure comprises 312 residues: Light-independent protochlorophyllide reductase iron-sulfur ATP-binding protein (312 aa).

Residues 55–60 (GIGKST) and Lys84 contribute to the ATP site. Ser59 is a Mg(2+) binding site. The [4Fe-4S] cluster site is built by Cys140 and Cys174. Residues 225–226 (NR) and 249–251 (PDL) each bind ATP.

The protein belongs to the NifH/BchL/ChlL family. Homodimer. Protochlorophyllide reductase is composed of three subunits; BchL, BchN and BchB. [4Fe-4S] cluster serves as cofactor.

The enzyme catalyses chlorophyllide a + oxidized 2[4Fe-4S]-[ferredoxin] + 2 ADP + 2 phosphate = protochlorophyllide a + reduced 2[4Fe-4S]-[ferredoxin] + 2 ATP + 2 H2O. Its pathway is porphyrin-containing compound metabolism; bacteriochlorophyll biosynthesis (light-independent). Functionally, component of the dark-operative protochlorophyllide reductase (DPOR) that uses Mg-ATP and reduced ferredoxin to reduce ring D of protochlorophyllide (Pchlide) to form chlorophyllide a (Chlide). This reaction is light-independent. The L component serves as a unique electron donor to the NB-component of the complex, and binds Mg-ATP. This Rhodopseudomonas palustris (strain BisB18) protein is Light-independent protochlorophyllide reductase iron-sulfur ATP-binding protein.